Here is a 271-residue protein sequence, read N- to C-terminus: Beta-lysine N(6)-acetyltransferase (271 aa).

The interval 86–122 (LRKDRGTGKNQKKKKISRKKDNWKKRKEKSRLPEGYT) is disordered. Residues 95 to 114 (NQKKKKISRKKDNWKKRKEK) are compositionally biased toward basic residues. An N-acetyltransferase domain is found at 121-269 (YTLRPAVQAD…GFEDMNIWCR (149 aa)).

The protein belongs to the acetyltransferase family.

The enzyme catalyses (3S)-3,6-diaminohexanoate + acetyl-CoA = (3S)-6-acetamido-3-aminohexanoate + CoA + H(+). Catalyzes the acetylation of beta-lysine to N6-acetyl-beta-lysine, a compatible solute produced by methanogenic archaea that helps cells to cope with salt stress. This is Beta-lysine N(6)-acetyltransferase from Methanosarcina mazei (strain ATCC BAA-159 / DSM 3647 / Goe1 / Go1 / JCM 11833 / OCM 88) (Methanosarcina frisia).